A 492-amino-acid chain; its full sequence is Transmembrane protein 39B (492 aa).

The interval 1–54 (MGGRRGPNRTSYCRNPLCEPGSSGGSSGSHTSSASVTSVRSRTRSSSGTGLSSP) is disordered. An N-linked (GlcNAc...) asparagine glycan is attached at Asn-8. Residues 28 to 53 (GSHTSSASVTSVRSRTRSSSGTGLSS) show a composition bias toward low complexity. The next 8 helical transmembrane spans lie at 77-97 (SILF…VHYI), 115-135 (TSLN…IVLG), 153-175 (SLFR…GWSL), 185-205 (TYSF…IPFL), 288-308 (EVLV…VWFV), 322-342 (LFLL…LPAS), 421-441 (ILNI…YSLM), and 447-467 (HQTI…FKLL).

It belongs to the TMEM39 family.

It is found in the endoplasmic reticulum membrane. Functionally, may protect the cells against DNA damage caused by exposure to the cold-warming stress and facilitates tissue damage repair during the recovery phase. The polypeptide is Transmembrane protein 39B (Homo sapiens (Human)).